We begin with the raw amino-acid sequence, 765 residues long: Eukaryotic translation initiation factor 3 subunit B (765 aa).

The interval 1–136 (MKNFLPRTLK…LFVECGSMND (136 aa)) is sufficient for interaction with HCR1 and TIF32. The tract at residues 28–261 (RNTQLKRSKI…GVTAWGGPNF (234 aa)) is sufficient for interaction with PIC8. At Ser61 the chain carries Phosphoserine. The residue at position 67 (Tyr67) is a Phosphotyrosine. Residues 77-162 (QYIVVNGAPV…HRLFLYTMKD (86 aa)) form the RRM domain. A Phosphoserine modification is found at Ser671.

This sequence belongs to the eIF-3 subunit B family. As to quaternary structure, component of the eukaryotic translation initiation factor 3 (eIF-3) complex.

Its subcellular location is the cytoplasm. Its function is as follows. RNA-binding component of the eukaryotic translation initiation factor 3 (eIF-3) complex, which is involved in protein synthesis of a specialized repertoire of mRNAs and, together with other initiation factors, stimulates binding of mRNA and methionyl-tRNAi to the 40S ribosome. The eIF-3 complex specifically targets and initiates translation of a subset of mRNAs involved in cell proliferation. This Saccharomyces cerevisiae (strain YJM789) (Baker's yeast) protein is Eukaryotic translation initiation factor 3 subunit B.